The sequence spans 54 residues: uncharacterized protein (54 aa).

A helical transmembrane segment spans residues 32–52; the sequence is LFSLLVLIILCFIDPILFYFI.

It is found in the host membrane. This is an uncharacterized protein from Cassava vein mosaic virus (CsVMV).